The primary structure comprises 642 residues: Chaperone protein DnaK (642 aa).

A Phosphothreonine; by autocatalysis modification is found at Thr-200. Low complexity predominate over residues 608–618; sequence QAESQAAGEGQ. The tract at residues 608-642 is disordered; sequence QAESQAAGEGQPDAGKKDDGNVVDAEFEEVKKDKQ.

The protein belongs to the heat shock protein 70 family.

Acts as a chaperone. The protein is Chaperone protein DnaK of Laribacter hongkongensis (strain HLHK9).